We begin with the raw amino-acid sequence, 167 residues long: Adenylylsulfate reductase subunit beta (167 aa).

4Fe-4S ferredoxin-type domains are found at residues 1 to 35 and 38 to 67; these read MPTFVDPSKCDGCKGGEKTACMYICPNDLMILDPE and KAFNQEPEACWECYSCIKICPQGAITARPY. [4Fe-4S] cluster is bound by residues Cys10, Cys13, Cys21, Cys25, Cys47, Cys50, Cys53, and Cys57.

In terms of assembly, heterodimer composed of AprA and AprB. The heterodimers can dimerize to form heterotetramers. It depends on [4Fe-4S] cluster as a cofactor.

It is found in the cytoplasm. Its function is as follows. Iron-sulfur cluster subunit of the adenylylsulfate reductase which catalyzes reversibly the reduction of adenosine 5'-phosphosulfate (APS) to sulfite and AMP during dissimilatory sulfate reduction. The iron-sulfur cluster 2 is thought to accept electrons from a still unknown electron donor and transfer electrons to the iron-sulfur cluster 1 of this protein and then onto the FAD of AprA. In Megalodesulfovibrio gigas (strain ATCC 19364 / DSM 1382 / NCIMB 9332 / VKM B-1759) (Desulfovibrio gigas), this protein is Adenylylsulfate reductase subunit beta.